Reading from the N-terminus, the 677-residue chain is Mitochondrial 15S rRNA processing factor ppr3 (677 aa).

A mitochondrion-targeting transit peptide spans 1–43; that stretch reads MFTEICGKLRTCIYKKVAFSRPLGCNLRQLPVFRDFHNSVSCL. PPR repeat units lie at residues 210 to 244, 245 to 279, 280 to 314, 317 to 351, 355 to 390, and 569 to 604; these read SVYL…QLKP, DNYT…KIEA, NTHV…SLQS, DDKT…PINP, SSRT…QWKP, and DIHV…SYLP.

This sequence belongs to the CCM1 family. In terms of assembly, binds to mitochondrial small subunit 15S rRNA.

The protein localises to the mitochondrion. Functionally, regulates mitochondrial small subunit maturation by controlling 15S rRNA 5'-end processing. Localizes to the 5' precursor of the 15S rRNA in a position that is subsequently occupied by mS47 in the mature yeast mtSSU. Uses structure and sequence-specific RNA recognition, binding to a single-stranded region of the precursor and specifically recognizing bases -6 to -1. The exchange of Ccm1 for mS47 is coupled to the irreversible removal of precursor rRNA that is accompanied by conformational changes of the mitoribosomal proteins uS5m and mS26. These conformational changes signal completion of 5'-end rRNA processing through protection of the mature 5'-end of the 15S rRNA and stabilization of mS47. The removal of the 5' precursor together with the dissociation of Ccm1 may be catalyzed by the 5'-3' exoribonuclease Pet127. Involved in the specific removal of group I introns in mitochondrial encoded transcripts. This Schizosaccharomyces japonicus (strain yFS275 / FY16936) (Fission yeast) protein is Mitochondrial 15S rRNA processing factor ppr3 (dmr1).